Reading from the N-terminus, the 88-residue chain is Cell division topological specificity factor (88 aa).

It belongs to the MinE family.

Functionally, prevents the cell division inhibition by proteins MinC and MinD at internal division sites while permitting inhibition at polar sites. This ensures cell division at the proper site by restricting the formation of a division septum at the midpoint of the long axis of the cell. This chain is Cell division topological specificity factor, found in Clostridium kluyveri (strain ATCC 8527 / DSM 555 / NBRC 12016 / NCIMB 10680 / K1).